Reading from the N-terminus, the 661-residue chain is Protein WHI3 (661 aa).

Residues 14–31 (ASSSDNVVSSTTNTHNIS) are compositionally biased toward low complexity. Positions 14–58 (ASSSDNVVSSTTNTHNISPSHRSSLNLNTTSHPHEASGRGSASGE) are disordered. Residues 32–44 (PSHRSSLNLNTTS) are compositionally biased toward polar residues. A Phosphoserine modification is found at Ser231. 3 stretches are compositionally biased toward low complexity: residues 237 to 272 (DPFS…SPQQ), 383 to 409 (NTSA…SASS), and 496 to 508 (KNNS…SNIT). 4 disordered regions span residues 237–280 (DPFS…QVNS), 383–410 (NTSA…ASSQ), 469–508 (EHMY…SNIT), and 613–661 (SSKG…HIKN). The 88-residue stretch at 538–625 (NTLYVGNLPS…GGIRLSFSKN (88 aa)) folds into the RRM domain. A compositionally biased stretch (low complexity) spans 628-647 (GVRGPNSRRGGSGNPNPNVN). Residues 648–661 (MLSSYNSNVGHIKN) are compositionally biased toward polar residues.

Involved in size control and cell cycle. The protein is Protein WHI3 (WHI3) of Saccharomyces cerevisiae (strain ATCC 204508 / S288c) (Baker's yeast).